The primary structure comprises 1435 residues: Nitric oxide synthase 1 (1435 aa).

The tract at residues 1-206 (MEEHVFGVQQ…LQGSGDKNEL (206 aa)) is interaction with NOSIP. Residues 17-99 (SVRLFKRKVG…ETHVVLILRG (83 aa)) form the PDZ domain. 2 disordered regions span residues 110–201 (TFTG…QGSG) and 277–304 (NNPYSEKEQPPASGKQSPTKNGSPSKCP). An interaction with DYNLL1/PIN region spans residues 164-246 (QGHGQEAGSP…TGVQVDRDFD (83 aa)). The segment covering 290–300 (GKQSPTKNGSP) has biased composition (polar residues). Ser-340 contributes to the (6R)-L-erythro-5,6,7,8-tetrahydrobiopterin binding site. Cys-421 lines the heme b pocket. Positions 484, 593, 594, and 598 each coordinate L-arginine. Residues Val-683, Trp-684, and Phe-697 each coordinate (6R)-L-erythro-5,6,7,8-tetrahydrobiopterin. Tyr-712 contacts heme b. The interval 731-751 (KRRAIGFKKLAEAVKFSAKLM) is calmodulin-binding. The Flavodoxin-like domain occupies 761–941 (ATILYATETG…AFRTWAKKVF (181 aa)). FMN-binding residues include Thr-767, Glu-768, Thr-769, Lys-771, Ser-772, Ser-813, Thr-814, and Gly-818. A phosphoserine mark is found at Ser-853, Ser-863, and Ser-864. 5 residues coordinate FMN: Ser-892, His-897, Cys-899, Glu-925, and Gln-929. Residues 996–1243 (KRVSAARLLS…VRGAPSFRLP (248 aa)) enclose the FAD-binding FR-type domain. An NADP(+)-binding site is contributed by Arg-1016. Residues His-1038, Arg-1179, Tyr-1180, Tyr-1181, Ser-1182, Thr-1197, and Ala-1199 each coordinate FAD. Residue Ser-1202 coordinates NADP(+). Residues Tyr-1203, Val-1216, Cys-1217, and Ser-1218 each coordinate FAD. Positions 1257, 1290, 1319, 1320, 1326, 1328, 1330, 1363, 1404, and 1406 each coordinate NADP(+).

Belongs to the NOS family. Homodimer. Interacts with DLG4; the interaction possibly being prevented by the association between NOS1 and CAPON. Forms a ternary complex with CAPON and RASD1. Forms a ternary complex with CAPON and SYN1. Interacts with ZDHHC23. Interacts with NOSIP; which may impair its synaptic location. Interacts with HTR4. Interacts with SLC6A4. Interacts with VAC14. Interacts (via N-terminal domain) with DLG4 (via N-terminal tandem pair of PDZ domains). Interacts with SLC6A4. Forms a complex with ASL, ASS1 and SLC7A1; the complex regulates cell-autonomous L-arginine synthesis and citrulline recycling while channeling extracellular L-arginine to nitric oxide synthesis pathway. Interacts with DMD; localizes NOS1 to sarcolemma in muscle cells. Interacts with DYNLL1; inhibits the nitric oxide synthase activity. Requires heme b as cofactor. FAD serves as cofactor. The cofactor is FMN. (6R)-L-erythro-5,6,7,8-tetrahydrobiopterin is required as a cofactor. Post-translationally, ubiquitinated; mediated by STUB1/CHIP in the presence of Hsp70 and Hsp40 (in vitro).

The protein localises to the cell membrane. It localises to the sarcolemma. Its subcellular location is the cell projection. The protein resides in the dendritic spine. It catalyses the reaction 2 L-arginine + 3 NADPH + 4 O2 + H(+) = 2 L-citrulline + 2 nitric oxide + 3 NADP(+) + 4 H2O. Its activity is regulated as follows. Stimulated by calcium/calmodulin. Inhibited by DYNLL1 that prevents the dimerization of the protein. Inhibited by NOSIP. Its function is as follows. Produces nitric oxide (NO) which is a messenger molecule with diverse functions throughout the body. In the brain and peripheral nervous system, NO displays many properties of a neurotransmitter. Probably has nitrosylase activity and mediates cysteine S-nitrosylation of cytoplasmic target proteins such SRR. This is Nitric oxide synthase 1 (NOS1) from Oryctolagus cuniculus (Rabbit).